The following is a 93-amino-acid chain: Large ribosomal subunit protein uL23cz/uL23cy (93 aa).

It belongs to the universal ribosomal protein uL23 family. Part of the 50S ribosomal subunit.

Its subcellular location is the plastid. The protein localises to the chloroplast. Functionally, binds to 23S rRNA. The chain is Large ribosomal subunit protein uL23cz/uL23cy (rpl23-A) from Cucumis sativus (Cucumber).